Reading from the N-terminus, the 425-residue chain is MTPPCLNCSFFPGQLSPNASTGLLSCNDSEFKEHFDLEDLNLTHEDLRLKYLGPQQVKQFLPICVTYLLIFVVGTLGNGLTCTVILRQKAMHTPTNFYLFSLAVSDLLVLLVGLPLELYEMQHNYPFQLGAGGCYFRILLLETVCLASVLNVTALSVERYVAVVHPLQAKSVMTRTHVRRMLGAIWVFAILFSLPNTSLHGLSPLYVPCRGPVPDSVTCTLVRPQFFYKLVIQTTILLFFCLPMVTISVLYLLIGLRLRRERILLQEEVKGRISAAARQASHRSIQLRDRERRQVTKMLIALVIVFGTCWVPFHADRLMWSMVSHWTDGLRLAFQSVHLASGVFLYLGSAANPVLYNLMSTRFRESFRETLGLGTRCCHRHQPRHDSHSHLRLTTVSTLCDRNSRDVPLAENRDPGCEQETDPPE.

The Extracellular segment spans residues 1-59 (MTPPCLNCSFFPGQLSPNASTGLLSCNDSEFKEHFDLEDLNLTHEDLRLKYLGPQQVKQ). N-linked (GlcNAc...) asparagine glycosylation is present at asparagine 41. Residues 60–80 (FLPICVTYLLIFVVGTLGNGL) traverse the membrane as a helical segment. At 81–96 (TCTVILRQKAMHTPTN) the chain is on the cytoplasmic side. Residues 97 to 117 (FYLFSLAVSDLLVLLVGLPLE) form a helical membrane-spanning segment. The Extracellular portion of the chain corresponds to 118–137 (LYEMQHNYPFQLGAGGCYFR). Cysteine 134 and cysteine 219 form a disulfide bridge. The helical transmembrane segment at 138–158 (ILLLETVCLASVLNVTALSVE) threads the bilayer. The Cytoplasmic portion of the chain corresponds to 159–181 (RYVAVVHPLQAKSVMTRTHVRRM). A helical membrane pass occupies residues 182 to 202 (LGAIWVFAILFSLPNTSLHGL). Residues 203–235 (SPLYVPCRGPVPDSVTCTLVRPQFFYKLVIQTT) are Extracellular-facing. A helical transmembrane segment spans residues 236–256 (ILLFFCLPMVTISVLYLLIGL). Residues 257–294 (RLRRERILLQEEVKGRISAAARQASHRSIQLRDRERRQ) are Cytoplasmic-facing. Residues 295–315 (VTKMLIALVIVFGTCWVPFHA) traverse the membrane as a helical segment. Residues 316 to 331 (DRLMWSMVSHWTDGLR) lie on the Extracellular side of the membrane. The helical transmembrane segment at 332 to 352 (LAFQSVHLASGVFLYLGSAAN) threads the bilayer. Residues 353 to 425 (PVLYNLMSTR…GCEQETDPPE (73 aa)) lie on the Cytoplasmic side of the membrane. The interval 406-425 (DVPLAENRDPGCEQETDPPE) is disordered.

It belongs to the G-protein coupled receptor 1 family. In terms of tissue distribution, highly expressed in the small intestine and lung. Low expression in the central nervous system.

Its subcellular location is the cell membrane. Functionally, receptor for the neuromedin-U and neuromedin-S neuropeptides. This is Neuromedin-U receptor 1 (Nmur1) from Rattus norvegicus (Rat).